A 737-amino-acid chain; its full sequence is Probable serine/threonine-protein kinase DDB_G0269628 (737 aa).

Positions 8–488 (YKLIKDLRSG…TLQKMDTSLL (481 aa)) constitute a Protein kinase domain. Residues 14–22 (LRSGGEGKA) and lysine 36 contribute to the ATP site. 2 disordered regions span residues 155–251 (NTIQ…KKCS) and 278–298 (TTAATTTTTTNTTHSSSSSSN). The span at 156-167 (TIQHSHSSSSLV) shows a compositional bias: polar residues. Over residues 168–229 (NGTTSPTNAT…PSSPSSPLSP (62 aa)) the composition is skewed to low complexity. The active-site Proton acceptor is the aspartate 349.

It belongs to the protein kinase superfamily. NEK Ser/Thr protein kinase family. NIMA subfamily.

The enzyme catalyses L-seryl-[protein] + ATP = O-phospho-L-seryl-[protein] + ADP + H(+). It catalyses the reaction L-threonyl-[protein] + ATP = O-phospho-L-threonyl-[protein] + ADP + H(+). The chain is Probable serine/threonine-protein kinase DDB_G0269628 from Dictyostelium discoideum (Social amoeba).